Consider the following 347-residue polypeptide: MRVADFHFDLPEALIARHPLPERRASRLLALDGPTGSLAHKQFADLLDYLRPGDLMVFNNTRVIPARLFGQKESGGKLEVLVERVLDQHRVLAHVRASKAPKPGTRILVEGGGSAEMLQRHDALFELAFAEPVLPLLERVGHMPLPPYIDRPDDAADRERYQTVYAQRAGAVAAPTAGLHFDEALLEAIRAKGVDTAFVTLHVGAGTFQPVRVERIEDHVMHREWLEVGQDVVDAVAACRARGGRVVAVGTTSVRSLESAARDGELKPFSGDTDIFIYPGRPFHVVDALVTNFHLPESTLLMLVSAFAGYPETMAAYAAAVEQGYRFFSYGDAMFITRNPAPRGPED.

This sequence belongs to the QueA family. As to quaternary structure, monomer.

The protein resides in the cytoplasm. It catalyses the reaction 7-aminomethyl-7-carbaguanosine(34) in tRNA + S-adenosyl-L-methionine = epoxyqueuosine(34) in tRNA + adenine + L-methionine + 2 H(+). It participates in tRNA modification; tRNA-queuosine biosynthesis. In terms of biological role, transfers and isomerizes the ribose moiety from AdoMet to the 7-aminomethyl group of 7-deazaguanine (preQ1-tRNA) to give epoxyqueuosine (oQ-tRNA). The sequence is that of S-adenosylmethionine:tRNA ribosyltransferase-isomerase from Pseudomonas paraeruginosa (strain DSM 24068 / PA7) (Pseudomonas aeruginosa (strain PA7)).